The primary structure comprises 205 residues: ESCRT-related protein CHMP1 (205 aa).

Coiled coils occupy residues 13 to 51 (DLKF…MDGA) and 109 to 140 (GNLQ…GAMA).

The protein belongs to the SNF7 family.

The protein localises to the cytoplasm. It is found in the endosome membrane. Functionally, involved in ESCRT-dependent multivesicular body (MVB) formation and sorting of endosomal cargo proteins into MVBs. The sequence is that of ESCRT-related protein CHMP1 from Oryza sativa subsp. japonica (Rice).